Here is a 526-residue protein sequence, read N- to C-terminus: Arp2/3 complex-activating protein rickA (526 aa).

Residues threonine 305 to alanine 356 are disordered. A compositionally biased stretch (pro residues) spans threonine 318–threonine 352. 2 WH2 domains span residues aspartate 383–valine 400 and serine 410–valine 427. Disordered regions lie at residues arginine 425–asparagine 452 and methionine 464–serine 526. The interval valine 448–aspartate 484 is central and acidic domains. Low complexity predominate over residues methionine 464–glycine 480. 2 stretches are compositionally biased toward polar residues: residues asparagine 481–lysine 491 and threonine 506–serine 526.

As to quaternary structure, homodimer.

The protein resides in the cell surface. In terms of biological role, recruits and activates the Arp2/3 complex, which in turn leads to actin polymerization, promoting Rickettsia motility during infection. This is Arp2/3 complex-activating protein rickA (rickA) from Rickettsia felis (strain ATCC VR-1525 / URRWXCal2) (Rickettsia azadi).